The primary structure comprises 71 residues: Small ribosomal subunit protein bS21 (71 aa).

The protein belongs to the bacterial ribosomal protein bS21 family.

The protein is Small ribosomal subunit protein bS21 of Acinetobacter baylyi (strain ATCC 33305 / BD413 / ADP1).